The chain runs to 325 residues: GMP reductase (325 aa).

C174 acts as the Thioimidate intermediate in catalysis. 203–226 contributes to the NADP(+) binding site; the sequence is IIADGGIRTNGDIAKSIRFGANMV.

It belongs to the IMPDH/GMPR family. GuaC type 2 subfamily.

The enzyme catalyses IMP + NH4(+) + NADP(+) = GMP + NADPH + 2 H(+). Its function is as follows. Catalyzes the irreversible NADPH-dependent deamination of GMP to IMP. It functions in the conversion of nucleobase, nucleoside and nucleotide derivatives of G to A nucleotides, and in maintaining the intracellular balance of A and G nucleotides. This is GMP reductase from Latilactobacillus sakei subsp. sakei (strain 23K) (Lactobacillus sakei subsp. sakei).